Consider the following 375-residue polypeptide: 23S rRNA (uracil(747)-C(5))-methyltransferase RlmC (375 aa).

The [4Fe-4S] cluster site is built by Cys-3, Cys-11, Cys-14, and Cys-87. The S-adenosyl-L-methionine site is built by Gln-212, Phe-241, Glu-262, and Asn-307. Catalysis depends on Cys-334, which acts as the Nucleophile.

This sequence belongs to the class I-like SAM-binding methyltransferase superfamily. RNA M5U methyltransferase family. RlmC subfamily.

The catalysed reaction is uridine(747) in 23S rRNA + S-adenosyl-L-methionine = 5-methyluridine(747) in 23S rRNA + S-adenosyl-L-homocysteine + H(+). In terms of biological role, catalyzes the formation of 5-methyl-uridine at position 747 (m5U747) in 23S rRNA. The protein is 23S rRNA (uracil(747)-C(5))-methyltransferase RlmC of Escherichia coli O157:H7.